A 387-amino-acid chain; its full sequence is UDP-N-acetylglucosamine--N-acetylmuramyl-(pentapeptide) pyrophosphoryl-undecaprenol N-acetylglucosamine transferase (387 aa).

Residues 23-25 (TGG), Asn135, Arg174, Ser203, Ile261, 280-285 (ALTVSE), and Gln306 each bind UDP-N-acetyl-alpha-D-glucosamine.

It belongs to the glycosyltransferase 28 family. MurG subfamily.

Its subcellular location is the cell inner membrane. The enzyme catalyses di-trans,octa-cis-undecaprenyl diphospho-N-acetyl-alpha-D-muramoyl-L-alanyl-D-glutamyl-meso-2,6-diaminopimeloyl-D-alanyl-D-alanine + UDP-N-acetyl-alpha-D-glucosamine = di-trans,octa-cis-undecaprenyl diphospho-[N-acetyl-alpha-D-glucosaminyl-(1-&gt;4)]-N-acetyl-alpha-D-muramoyl-L-alanyl-D-glutamyl-meso-2,6-diaminopimeloyl-D-alanyl-D-alanine + UDP + H(+). It functions in the pathway cell wall biogenesis; peptidoglycan biosynthesis. Functionally, cell wall formation. Catalyzes the transfer of a GlcNAc subunit on undecaprenyl-pyrophosphoryl-MurNAc-pentapeptide (lipid intermediate I) to form undecaprenyl-pyrophosphoryl-MurNAc-(pentapeptide)GlcNAc (lipid intermediate II). This Colwellia psychrerythraea (strain 34H / ATCC BAA-681) (Vibrio psychroerythus) protein is UDP-N-acetylglucosamine--N-acetylmuramyl-(pentapeptide) pyrophosphoryl-undecaprenol N-acetylglucosamine transferase.